A 136-amino-acid polypeptide reads, in one-letter code: ATP synthase epsilon chain (136 aa).

The protein belongs to the ATPase epsilon chain family. F-type ATPases have 2 components, CF(1) - the catalytic core - and CF(0) - the membrane proton channel. CF(1) has five subunits: alpha(3), beta(3), gamma(1), delta(1), epsilon(1). CF(0) has three main subunits: a, b and c.

Its subcellular location is the cell inner membrane. Produces ATP from ADP in the presence of a proton gradient across the membrane. This is ATP synthase epsilon chain from Agrobacterium fabrum (strain C58 / ATCC 33970) (Agrobacterium tumefaciens (strain C58)).